We begin with the raw amino-acid sequence, 480 residues long: Salicylate hydroxylase asL1 (480 aa).

A helical membrane pass occupies residues 17–37; sequence PMEIAIVGGGIVGVILAIGLT. FAD contacts are provided by Glu47 and Ala60. Asn87 carries N-linked (GlcNAc...) asparagine glycosylation. FAD is bound at residue Arg131. Asn168 is a glycosylation site (N-linked (GlcNAc...) asparagine). Residues Arg213 and Tyr246 contribute to the active site. Asn250 is a glycosylation site (N-linked (GlcNAc...) asparagine). FAD is bound by residues Asp329 and Ala342. N-linked (GlcNAc...) asparagine glycosylation is found at Asn400 and Asn464.

This sequence belongs to the paxM FAD-dependent monooxygenase family. FAD is required as a cofactor.

It is found in the membrane. Its pathway is secondary metabolite biosynthesis; terpenoid biosynthesis. Salicylate hydroxylase; part of the gene cluster that mediates the biosynthesis of xenovulene A, an unusual meroterpenoid that has potent inhibitory effects on the human gamma-aminobutyrate A (GABAA) benzodiazepine receptor. The first step of xenovulene A biosynthesis is the biosynthesis of 3-methylorcinaldehyde performed by the non-reducing polyketide synthase aspks1. The salicylate hydroxylase asL1 then catalyzes the oxidative dearomatization of 3-methylorcinaldehyde to yield a dearomatized hydroxycyclohexadione. The 2-oxoglutarate-dependent dioxygenase asL3 further catalyzes the oxidative ring expansion to provide the first tropolone metabolite. The cytochrome P450 monooxygenase asR2 allows the synthesis of tropolone hemiacetal. In parallel, a previously unrecognised class of terpene cyclase, asR6, produces alpha-humulene from farnesylpyrophosphate (FPP). The putative Diels-Alderase asR5 probably catalyzes the formation of the tropolone-humulene skeleton by linking humulene and the polyketide moiety. Oxidative-ring contractions catalyzed by asL4 and asL6 then processively remove carbon atoms from the polyketide to yield xenovulene A. This is Salicylate hydroxylase asL1 from Sarocladium schorii (Acremonium strictum (strain IMI 501407)).